Consider the following 383-residue polypeptide: 8-amino-7-oxononanoate synthase (383 aa).

Residue Arg22 coordinates substrate. Gly109–Phe110 is a pyridoxal 5'-phosphate binding site. His134 contributes to the substrate binding site. Pyridoxal 5'-phosphate is bound by residues Ser178, His206, and Thr232. Residue Lys235 is modified to N6-(pyridoxal phosphate)lysine. Thr348 provides a ligand contact to substrate.

It belongs to the class-II pyridoxal-phosphate-dependent aminotransferase family. BioF subfamily. Homodimer. It depends on pyridoxal 5'-phosphate as a cofactor.

It carries out the reaction 6-carboxyhexanoyl-[ACP] + L-alanine + H(+) = (8S)-8-amino-7-oxononanoate + holo-[ACP] + CO2. It functions in the pathway cofactor biosynthesis; biotin biosynthesis. Its function is as follows. Catalyzes the decarboxylative condensation of pimeloyl-[acyl-carrier protein] and L-alanine to produce 8-amino-7-oxononanoate (AON), [acyl-carrier protein], and carbon dioxide. This Vibrio parahaemolyticus serotype O3:K6 (strain RIMD 2210633) protein is 8-amino-7-oxononanoate synthase.